A 358-amino-acid chain; its full sequence is L-lysine 3-hydroxylase (358 aa).

Positions 178, 180, and 314 each coordinate Fe cation. 2-oxoglutarate is bound at residue arginine 328.

It belongs to the clavaminate synthase family. It depends on Fe(2+) as a cofactor.

It catalyses the reaction L-lysine + 2-oxoglutarate + O2 = (3S)-3-hydroxy-L-lysine + succinate + CO2. Alpha-ketoglutarate-dependent dioxygenase that in vitro catalyzes the regio- and stereoselective hydroxylation of L-lysine, leading to (3S)-3-hydroxy-L-lysine. Can also use (5R)-5-hydroxy-L-lysine as substrate, but neither D-lysine nor L-ornithine. This Catenulispora acidiphila (strain DSM 44928 / JCM 14897 / NBRC 102108 / NRRL B-24433 / ID139908) protein is L-lysine 3-hydroxylase.